The chain runs to 146 residues: Deoxyuridine 5'-triphosphate nucleotidohydrolase (146 aa).

Substrate is bound by residues 66–68 (RSG), Asn-79, 83–85 (TID), and Lys-93.

This sequence belongs to the dUTPase family. Mg(2+) is required as a cofactor.

The catalysed reaction is dUTP + H2O = dUMP + diphosphate + H(+). The protein operates within pyrimidine metabolism; dUMP biosynthesis; dUMP from dCTP (dUTP route): step 2/2. Functionally, this enzyme is involved in nucleotide metabolism: it produces dUMP, the immediate precursor of thymidine nucleotides and it decreases the intracellular concentration of dUTP so that uracil cannot be incorporated into DNA. This Zymomonas mobilis subsp. mobilis (strain ATCC 31821 / ZM4 / CP4) protein is Deoxyuridine 5'-triphosphate nucleotidohydrolase.